A 40-amino-acid chain; its full sequence is TVVSQVILKADDELRYPSSGELKSITEFLQTGEQRVRIAQ.

Belongs to the phycobiliprotein family. As to quaternary structure, heterodimer of an alpha and a beta chain. Post-translationally, contains one covalently linked bilin chromophore.

The protein localises to the cellular thylakoid membrane. In terms of biological role, light-harvesting photosynthetic bile pigment-protein from the phycobiliprotein complex. Allophycocyanin has a maximum absorption at approximately 650 nanometers. This Mastigocladus laminosus (Fischerella sp.) protein is Allophycocyanin alpha-B chain.